A 360-amino-acid chain; its full sequence is Probable dual-specificity RNA methyltransferase RlmN (360 aa).

Glu91 (proton acceptor) is an active-site residue. Residues 97–335 enclose the Radical SAM core domain; that stretch reads QHYGQSVCVT…CVVRQEHGTD (239 aa). Cys104 and Cys340 are oxidised to a cystine. Cys111, Cys115, and Cys118 together coordinate [4Fe-4S] cluster. S-adenosyl-L-methionine-binding positions include 163-164, Ser195, 218-220, and Asn296; these read GE and SLH. Catalysis depends on Cys340, which acts as the S-methylcysteine intermediate.

This sequence belongs to the radical SAM superfamily. RlmN family. [4Fe-4S] cluster serves as cofactor.

Its subcellular location is the cytoplasm. The enzyme catalyses adenosine(2503) in 23S rRNA + 2 reduced [2Fe-2S]-[ferredoxin] + 2 S-adenosyl-L-methionine = 2-methyladenosine(2503) in 23S rRNA + 5'-deoxyadenosine + L-methionine + 2 oxidized [2Fe-2S]-[ferredoxin] + S-adenosyl-L-homocysteine. It carries out the reaction adenosine(37) in tRNA + 2 reduced [2Fe-2S]-[ferredoxin] + 2 S-adenosyl-L-methionine = 2-methyladenosine(37) in tRNA + 5'-deoxyadenosine + L-methionine + 2 oxidized [2Fe-2S]-[ferredoxin] + S-adenosyl-L-homocysteine. Its function is as follows. Specifically methylates position 2 of adenine 2503 in 23S rRNA and position 2 of adenine 37 in tRNAs. The protein is Probable dual-specificity RNA methyltransferase RlmN of Streptococcus equi subsp. zooepidemicus (strain H70).